Here is a 400-residue protein sequence, read N- to C-terminus: DNA alpha-glucosyltransferase (400 aa).

Interacts with clamp protein gp45.

The enzyme catalyses Transfers an alpha-D-glucosyl residue from UDP-glucose to a hydroxymethylcytosine residue in DNA.. It functions in the pathway genetic information processing; DNA modification. In terms of biological role, catalyzes the transfer of glucose from uridine diphosphoglucose to 5-hydroxymethyl cytosine of T4 DNA to yield glucosyl 5-hydroxymethyl cytosine (glc-HMC). This DNA process seems to occur immediately after DNA synthesis since the DNA alpha-glucosyltransferase interacts with the clamp protein gp45. The glc-HMC modification protects the phage genome against its own nucleases and the host restriction endonuclease system. The glc-HMC modification also protects against the host CRISPR-Cas9 defense system. In Escherichia coli (Bacteriophage T4), this protein is DNA alpha-glucosyltransferase (agt).